Reading from the N-terminus, the 246-residue chain is UDP-N-acetyl-D-mannosaminuronic acid transferase (246 aa).

It belongs to the glycosyltransferase 26 family.

It catalyses the reaction UDP-N-acetyl-alpha-D-mannosaminouronate + N-acetyl-alpha-D-glucosaminyl-di-trans,octa-cis-undecaprenyl diphosphate = beta-D-ManNAcA-(1-&gt;4)-alpha-D-GlcNAc-di-trans,octa-cis-undecaprenyl diphosphate + UDP + H(+). Its pathway is bacterial outer membrane biogenesis; enterobacterial common antigen biosynthesis. Functionally, catalyzes the synthesis of Und-PP-GlcNAc-ManNAcA (Lipid II), the second lipid-linked intermediate involved in enterobacterial common antigen (ECA) synthesis. This is UDP-N-acetyl-D-mannosaminuronic acid transferase from Escherichia coli O7:K1 (strain IAI39 / ExPEC).